A 943-amino-acid polypeptide reads, in one-letter code: 2-oxoglutarate dehydrogenase E1 component (943 aa).

Belongs to the alpha-ketoglutarate dehydrogenase family. Homodimer. Part of the 2-oxoglutarate dehydrogenase (OGDH) complex composed of E1 (2-oxoglutarate dehydrogenase), E2 (dihydrolipoamide succinyltransferase) and E3 (dihydrolipoamide dehydrogenase); the complex contains multiple copies of the three enzymatic components (E1, E2 and E3). Thiamine diphosphate is required as a cofactor.

The enzyme catalyses N(6)-[(R)-lipoyl]-L-lysyl-[protein] + 2-oxoglutarate + H(+) = N(6)-[(R)-S(8)-succinyldihydrolipoyl]-L-lysyl-[protein] + CO2. E1 component of the 2-oxoglutarate dehydrogenase (OGDH) complex which catalyzes the decarboxylation of 2-oxoglutarate, the first step in the conversion of 2-oxoglutarate to succinyl-CoA and CO(2). In Shouchella clausii (strain KSM-K16) (Alkalihalobacillus clausii), this protein is 2-oxoglutarate dehydrogenase E1 component.